Consider the following 374-residue polypeptide: Alpha-N-acetylgalactosaminide alpha-2,6-sialyltransferase 2 (374 aa).

The Cytoplasmic portion of the chain corresponds to 1-7 (MGLPRGS). The chain crosses the membrane as a helical; Signal-anchor for type II membrane protein span at residues 8-28 (FFWLLLLLTAACSGLLFALYF). Over 29-374 (SAVQRYPGPA…KAGILQLYQR (346 aa)) the chain is Lumenal. 2 disulfides stabilise this stretch: C66/C148 and C151/C317. N-linked (GlcNAc...) asparagine glycosylation is found at N85 and N130. N156 is a CMP-N-acetyl-beta-neuraminate binding site. N-linked (GlcNAc...) asparagine glycosylation occurs at N161. N179, S304, and H336 together coordinate CMP-N-acetyl-beta-neuraminate.

This sequence belongs to the glycosyltransferase 29 family. Expressed in skeletal muscle, heart, kidney, placenta, lung and leukocytes.

It localises to the golgi apparatus membrane. The enzyme catalyses a beta-D-galactosyl-(1-&gt;3)-N-acetyl-alpha-D-galactosaminyl derivative + CMP-N-acetyl-beta-neuraminate = a beta-D-galactosyl-(1-&gt;3)-[N-acetyl-alpha-neuraminyl-(2-&gt;6)]-N-acetyl-alpha-D-galactosaminyl derivative + CMP + H(+). It catalyses the reaction a 3-O-[N-acetyl-alpha-D-galactosaminyl]-L-threonyl-[protein] + CMP-N-acetyl-beta-neuraminate = a 3-O-[N-acetyl-alpha-neuraminosyl-(2-&gt;6)-N-acetyl-alpha-D-galactosaminyl]-L-threonyl-[protein] + CMP + H(+). The catalysed reaction is a 3-O-[N-acetyl-alpha-neuraminyl-(2-&gt;3)-beta-D-galactosyl-(1-&gt;3)-N-acetyl-alpha-D-galactosaminyl]-L-threonyl-[protein] + CMP-N-acetyl-beta-neuraminate = a 3-O-{alpha-Neu5Ac-(2-&gt;3)-beta-D-Gal-(1-&gt;3)-[alpha-Neu5Ac-(2-&gt;6)]-alpha-D-GalNAc}-L-threonyl-[protein] + CMP + H(+). It participates in protein modification; protein glycosylation. Its function is as follows. Catalyzes the transfer of N-acetylneuraminyl groups onto glycan chains in glycoproteins. Conjugates sialic acid with an alpha-2-6 linkage to N-acetylgalactosamine (GalNAc) glycan chains linked to serine or threonine in glycoproteins. Sialylates alphaGalNAc- and Galbeta1-&gt;3GalNAc-O-Ser/Thr epitopes also known as Tn and T antigens. The polypeptide is Alpha-N-acetylgalactosaminide alpha-2,6-sialyltransferase 2 (ST6GALNAC2) (Homo sapiens (Human)).